The sequence spans 694 residues: Elongation factor G (694 aa).

Positions 8–287 constitute a tr-type G domain; the sequence is EDYRNFGIMA…AVVEFLPAPT (280 aa). Residues 17–24, 86–90, and 140–143 each bind GTP; these read AHIDAGKT, DTPGH, and NKMD.

This sequence belongs to the TRAFAC class translation factor GTPase superfamily. Classic translation factor GTPase family. EF-G/EF-2 subfamily.

The protein resides in the cytoplasm. Its function is as follows. Catalyzes the GTP-dependent ribosomal translocation step during translation elongation. During this step, the ribosome changes from the pre-translocational (PRE) to the post-translocational (POST) state as the newly formed A-site-bound peptidyl-tRNA and P-site-bound deacylated tRNA move to the P and E sites, respectively. Catalyzes the coordinated movement of the two tRNA molecules, the mRNA and conformational changes in the ribosome. This chain is Elongation factor G, found in Brucella canis (strain ATCC 23365 / NCTC 10854 / RM-666).